Reading from the N-terminus, the 429-residue chain is DNA primase DnaG (429 aa).

The 75-residue stretch at 172–246 (DSIIVVEGRN…DVDFIARAPP (75 aa)) folds into the Toprim domain. Positions 178, 220, and 222 each coordinate Mg(2+). The tract at residues 287–322 (RNTKELEERQGNELKNERPEKINENEESEKNVELKE) is disordered.

Belongs to the archaeal DnaG primase family. Forms a ternary complex with MCM helicase and DNA. Component of the archaeal exosome complex. The cofactor is Mg(2+).

The enzyme catalyses ssDNA + n NTP = ssDNA/pppN(pN)n-1 hybrid + (n-1) diphosphate.. In terms of biological role, RNA polymerase that catalyzes the synthesis of short RNA molecules used as primers for DNA polymerase during DNA replication. Also part of the exosome, which is a complex involved in RNA degradation. Acts as a poly(A)-binding protein that enhances the interaction between heteromeric, adenine-rich transcripts and the exosome. The chain is DNA primase DnaG from Picrophilus torridus (strain ATCC 700027 / DSM 9790 / JCM 10055 / NBRC 100828 / KAW 2/3).